Here is a 486-residue protein sequence, read N- to C-terminus: Bifunctional protein GlmU (486 aa).

The interval 1-236 (MTDQNLAIVV…SWLVDGINDR (236 aa)) is pyrophosphorylase. Residues 11-14 (LAAG), Lys25, Gln78, and 83-84 (GT) contribute to the UDP-N-acetyl-alpha-D-glucosamine site. A Mg(2+)-binding site is contributed by Asp109. Residues Gly146, Glu161, Asn176, and Asn234 each coordinate UDP-N-acetyl-alpha-D-glucosamine. Asn234 provides a ligand contact to Mg(2+). Residues 237-257 (AQLSEAAAKLNALTVRAWQLA) form a linker region. An N-acetyltransferase region spans residues 258 to 486 (GVTVQDPATT…ASNAAEESGE (229 aa)). Residues Arg339 and Lys357 each coordinate UDP-N-acetyl-alpha-D-glucosamine. Catalysis depends on His369, which acts as the Proton acceptor. Positions 372 and 383 each coordinate UDP-N-acetyl-alpha-D-glucosamine. Acetyl-CoA contacts are provided by residues Ala386, 392 to 393 (NY), and Ala429. The disordered stretch occupies residues 459-486 (RRPGTDAARAAQRNGAAEASNAAEESGE). The span at 465–486 (AARAAQRNGAAEASNAAEESGE) shows a compositional bias: low complexity.

It in the N-terminal section; belongs to the N-acetylglucosamine-1-phosphate uridyltransferase family. The protein in the C-terminal section; belongs to the transferase hexapeptide repeat family. Homotrimer. The cofactor is Mg(2+).

The protein localises to the cytoplasm. It carries out the reaction alpha-D-glucosamine 1-phosphate + acetyl-CoA = N-acetyl-alpha-D-glucosamine 1-phosphate + CoA + H(+). It catalyses the reaction N-acetyl-alpha-D-glucosamine 1-phosphate + UTP + H(+) = UDP-N-acetyl-alpha-D-glucosamine + diphosphate. The protein operates within nucleotide-sugar biosynthesis; UDP-N-acetyl-alpha-D-glucosamine biosynthesis; N-acetyl-alpha-D-glucosamine 1-phosphate from alpha-D-glucosamine 6-phosphate (route II): step 2/2. Its pathway is nucleotide-sugar biosynthesis; UDP-N-acetyl-alpha-D-glucosamine biosynthesis; UDP-N-acetyl-alpha-D-glucosamine from N-acetyl-alpha-D-glucosamine 1-phosphate: step 1/1. It participates in bacterial outer membrane biogenesis; LPS lipid A biosynthesis. Its function is as follows. Catalyzes the last two sequential reactions in the de novo biosynthetic pathway for UDP-N-acetylglucosamine (UDP-GlcNAc). The C-terminal domain catalyzes the transfer of acetyl group from acetyl coenzyme A to glucosamine-1-phosphate (GlcN-1-P) to produce N-acetylglucosamine-1-phosphate (GlcNAc-1-P), which is converted into UDP-GlcNAc by the transfer of uridine 5-monophosphate (from uridine 5-triphosphate), a reaction catalyzed by the N-terminal domain. This is Bifunctional protein GlmU from Leifsonia xyli subsp. xyli (strain CTCB07).